The sequence spans 594 residues: Interactor of HORMAD1 protein 1 (594 aa).

Coiled coils occupy residues 109–135, 165–189, and 219–245; these read VGKS…SETL, QSIL…NDLV, and EMKS…CEQL. The span at 434–443 shows a compositional bias: basic and acidic residues; sequence VEMRGKDKKQ. The tract at residues 434-454 is disordered; that stretch reads VEMRGKDKKQQPRKAHRAHRG. The segment covering 444–454 has biased composition (basic residues); the sequence is QPRKAHRAHRG. Residues S588 and S589 each carry the phosphoserine modification.

In terms of assembly, part of the MCD recombinosome complex, at least composed of IHO1, REC114 and MEI4. Interacts with REC114. Interacts with MEI4. Interacts with HORMAD1. Interacts with ANKRD31.

The protein localises to the chromosome. In terms of biological role, required for DNA double-strand breaks (DSBs) formation in unsynapsed regions during meiotic recombination. Probably acts by forming a complex with MEI4 and REC114, which activates DSBs formation in unsynapsed regions, an essential step to ensure completion of synapsis. Not required for HORMAD1 functions in pairing-independent synaptonemal complex formation, ATR recruitment to unsynapsed axes, meiotic silencing of unsynapsed chromatin (MSUC) or meiotic surveillance. The sequence is that of Interactor of HORMAD1 protein 1 from Homo sapiens (Human).